We begin with the raw amino-acid sequence, 489 residues long: Serine/arginine-rich splicing factor 4 (489 aa).

The 71-residue stretch at 2–72 folds into the RRM 1 domain; the sequence is PRVYIGRLSY…ERVIVEHARG (71 aa). Disordered stretches follow at residues 72 to 95 and 169 to 489; these read GPRRDGSYGSGRSGYGYRRSGRDK and KIRL…HSRS. 2 positions are modified to phosphoserine: S78 and S84. The RRM 2 domain occupies 104–177; it reads YRLIVENLSS…RKIRLVEDKP (74 aa). 2 stretches are compositionally biased toward basic residues: residues 179-206 and 214-246; these read SRRRRSYSRSRSHSRSRSRSRHSRKSRS and SHSKSRSRSRSGSHSRSKSRSRSQSRSRSKKEK. Positions 247–279 are enriched in basic and acidic residues; it reads SRSPSKDNKSRSRSRSPDKSRSKSKDHAEDKLQ. Residues S289, S291, and S293 each carry the phosphoserine modification. Basic and acidic residues predominate over residues 293–332; it reads SRHDSKSRSRSQERRAEEERRRSVSRARSQEKSRSQEKSL. A compositionally biased stretch (basic residues) spans 333 to 356; the sequence is LKSRSRSRSRSRSRSKDKRKGRKR. Basic and acidic residues-rich tracts occupy residues 357–370 and 394–426; these read SRDESRSRSRSKSE and KDTDHSRSPSRSVSKEREHAKAESGQRGSRAEG. A phosphoserine mark is found at S441, S453, and S455. Basic residues-rich tracts occupy residues 456-469 and 479-489; these read RSKSASKTRSRSKS and SRSRSRSHSRS.

Belongs to the splicing factor SR family. As to quaternary structure, found in a pre-mRNA splicing complex with SRSF4/SFRS4, SRSF5/SFRS5, SNRNP70, SNRPA1, SRRM1 and SRRM2. Interacts with PNN. Post-translationally, extensively phosphorylated on serine residues in the RS domain.

It localises to the nucleus speckle. Plays a role in alternative splice site selection during pre-mRNA splicing. Represses the splicing of MAPT/Tau exon 10. In Mus musculus (Mouse), this protein is Serine/arginine-rich splicing factor 4 (Srsf4).